A 346-amino-acid polypeptide reads, in one-letter code: Dehydrogenase orf1 (346 aa).

43–48 contacts NADP(+); the sequence is VDYATQ. 133-140 lines the substrate pocket; that stretch reads LAFSTAIV. Residues 170–173, 193–196, Tyr211, and 251–252 each bind NADP(+); these read ATSV, SPHN, and LN. Residue 269-273 participates in substrate binding; the sequence is APPNV. 336–337 serves as a coordination point for NADP(+); it reads VS.

The protein belongs to the zinc-containing alcohol dehydrogenase family.

The protein operates within secondary metabolite biosynthesis. Its function is as follows. Dehydrogenase; part of the gene cluster that mediates the biosynthesis of nigerpyrone and its derivatives carbonarone A and pestalamide A. The biosynthesis pathway begins with the polyketide assembly by epaA to form phenylacetyl triketide precursor from successive condensation of two malonyl-CoA, presumably with one phenylacetyl-CoA starter unit produced by the phenylacetyl-CoA ligase epaB. For the nigerpyrone biosynthesis, the reactive polyketide chain is released as an aldehyde through the R-domain. A nonenzymatic cyclization and dehydration may create nigerpyrone. For the biosynthesis of carbonarone A and pestalamide A, an extra methyl group is added through the C-methyltransferase domain. Several further steps involving the dehydrogenase orf1, the cytochrome P450 monooxygenase orf2 and the FAD-dependent monooxygenase orf3 are required to form a carbonarone A precursor which is converted to carbonarone A via cyclization. The O-acetyltransferase epaC could catalyze the transfer of 2-methylsuccinyl-CoA, a common intermediate in the ethylmalonyl-CoA pathway, to generate the final product pestalamide A. The chain is Dehydrogenase orf1 from Aspergillus niger (strain ATCC MYA-4892 / CBS 513.88 / FGSC A1513).